Reading from the N-terminus, the 495-residue chain is UDP-N-acetylmuramoyl-L-alanyl-D-glutamate--2,6-diaminopimelate ligase (495 aa).

Ser29 lines the UDP-N-acetyl-alpha-D-muramoyl-L-alanyl-D-glutamate pocket. 111 to 117 (GTNGKTS) serves as a coordination point for ATP. UDP-N-acetyl-alpha-D-muramoyl-L-alanyl-D-glutamate contacts are provided by residues 153-154 (TT), Ser180, Gln186, and Arg188. N6-carboxylysine is present on Lys220. Meso-2,6-diaminopimelate is bound by residues Arg384, 408–411 (DNPR), Gly459, and Glu463. The short motif at 408 to 411 (DNPR) is the Meso-diaminopimelate recognition motif element.

The protein belongs to the MurCDEF family. MurE subfamily. Mg(2+) serves as cofactor. In terms of processing, carboxylation is probably crucial for Mg(2+) binding and, consequently, for the gamma-phosphate positioning of ATP.

It localises to the cytoplasm. It carries out the reaction UDP-N-acetyl-alpha-D-muramoyl-L-alanyl-D-glutamate + meso-2,6-diaminopimelate + ATP = UDP-N-acetyl-alpha-D-muramoyl-L-alanyl-gamma-D-glutamyl-meso-2,6-diaminopimelate + ADP + phosphate + H(+). It functions in the pathway cell wall biogenesis; peptidoglycan biosynthesis. Functionally, catalyzes the addition of meso-diaminopimelic acid to the nucleotide precursor UDP-N-acetylmuramoyl-L-alanyl-D-glutamate (UMAG) in the biosynthesis of bacterial cell-wall peptidoglycan. This Xanthomonas campestris pv. campestris (strain 8004) protein is UDP-N-acetylmuramoyl-L-alanyl-D-glutamate--2,6-diaminopimelate ligase.